A 204-amino-acid polypeptide reads, in one-letter code: Transcription initiation factor TFIID subunit 11b (204 aa).

The disordered stretch occupies residues 38 to 60 (PFEAAMEEQEESPVETEQTLEGD). Residues 42 to 58 (AMEEQEESPVETEQTLE) are compositionally biased toward acidic residues. Residues 106-195 (FTEEQMSRYE…RRLKLQGKVP (90 aa)) form the Histone-fold domain.

This sequence belongs to the TAF11 family. Component of the TFIID complex. TFIID is composed of TATA binding protein (TBP) and a number of TBP-associated factors (TAFs) whose MWs range from 14-217 kDa. In terms of tissue distribution, expressed in roots, leaves and inflorescences.

It is found in the nucleus. Its function is as follows. TAFs are components of the transcription factor IID (TFIID) complex that is essential for mediating regulation of RNA polymerase transcription. This Arabidopsis thaliana (Mouse-ear cress) protein is Transcription initiation factor TFIID subunit 11b (TAF11B).